A 354-amino-acid chain; its full sequence is DNA polymerase IV (354 aa).

Positions 14–198 (IIHIDMDAFF…MDIAKFHGVG (185 aa)) constitute a UmuC domain. Positions 18 and 116 each coordinate Mg(2+). The active site involves E117.

It belongs to the DNA polymerase type-Y family. In terms of assembly, monomer. It depends on Mg(2+) as a cofactor.

The protein resides in the cytoplasm. The catalysed reaction is DNA(n) + a 2'-deoxyribonucleoside 5'-triphosphate = DNA(n+1) + diphosphate. Its function is as follows. Poorly processive, error-prone DNA polymerase involved in untargeted mutagenesis. Copies undamaged DNA at stalled replication forks, which arise in vivo from mismatched or misaligned primer ends. These misaligned primers can be extended by PolIV. Exhibits no 3'-5' exonuclease (proofreading) activity. May be involved in translesional synthesis, in conjunction with the beta clamp from PolIII. This Streptococcus gordonii (strain Challis / ATCC 35105 / BCRC 15272 / CH1 / DL1 / V288) protein is DNA polymerase IV.